The following is a 454-amino-acid chain: Cobyrinate a,c-diamide synthase (454 aa).

The region spanning 244–435 is the GATase cobBQ-type domain; that stretch reads KIAVAYDSAF…VHIHFLSNIA (192 aa). The Nucleophile role is filled by Cys-327.

The protein belongs to the CobB/CbiA family. Requires Mg(2+) as cofactor.

The catalysed reaction is cob(II)yrinate + 2 L-glutamine + 2 ATP + 2 H2O = cob(II)yrinate a,c diamide + 2 L-glutamate + 2 ADP + 2 phosphate + 2 H(+). The protein operates within cofactor biosynthesis; adenosylcobalamin biosynthesis; cob(II)yrinate a,c-diamide from sirohydrochlorin (anaerobic route): step 10/10. Catalyzes the ATP-dependent amidation of the two carboxylate groups at positions a and c of cobyrinate, using either L-glutamine or ammonia as the nitrogen source. The protein is Cobyrinate a,c-diamide synthase of Thermoplasma volcanium (strain ATCC 51530 / DSM 4299 / JCM 9571 / NBRC 15438 / GSS1).